Here is a 733-residue protein sequence, read N- to C-terminus: Polyribonucleotide nucleotidyltransferase (733 aa).

2 residues coordinate Mg(2+): Asp488 and Asp494. The KH domain maps to 555 to 614 (PRIEVMNIAVDKIRDVIGTGGKVIREIVEQTGAKINIEDDGTIRIASADAKTIEAAKRWI). Residues 624–692 (GVIYQGTVVK…ERGKVRLSMK (69 aa)) enclose the S1 motif domain. Positions 711–722 (EQEKYTEETHKS) are enriched in basic and acidic residues. The segment at 711–733 (EQEKYTEETHKSENKRRRKKKEE) is disordered. Residues 723–733 (ENKRRRKKKEE) are compositionally biased toward basic residues.

Belongs to the polyribonucleotide nucleotidyltransferase family. Mg(2+) is required as a cofactor.

It localises to the cytoplasm. The catalysed reaction is RNA(n+1) + phosphate = RNA(n) + a ribonucleoside 5'-diphosphate. Involved in mRNA degradation. Catalyzes the phosphorolysis of single-stranded polyribonucleotides processively in the 3'- to 5'-direction. This is Polyribonucleotide nucleotidyltransferase from Bartonella henselae (strain ATCC 49882 / DSM 28221 / CCUG 30454 / Houston 1) (Rochalimaea henselae).